The sequence spans 245 residues: Ribosomal RNA small subunit methyltransferase G (245 aa).

S-adenosyl-L-methionine is bound by residues glycine 90, leucine 95, 140–141 (AE), and arginine 158. The disordered stretch occupies residues 223 to 245 (VVSARRAKPPHPKSARTGKAGTR). The span at 227–245 (RRAKPPHPKSARTGKAGTR) shows a compositional bias: basic residues.

It belongs to the methyltransferase superfamily. RNA methyltransferase RsmG family.

It is found in the cytoplasm. Functionally, specifically methylates the N7 position of guanine in position 518 of 16S rRNA. This is Ribosomal RNA small subunit methyltransferase G from Mycobacterium avium (strain 104).